A 155-amino-acid chain; its full sequence is Ribosomal RNA large subunit methyltransferase H (155 aa).

S-adenosyl-L-methionine contacts are provided by residues I71, G103, and 122–127 (FGRMVW).

Belongs to the RNA methyltransferase RlmH family. In terms of assembly, homodimer.

The protein localises to the cytoplasm. The catalysed reaction is pseudouridine(1915) in 23S rRNA + S-adenosyl-L-methionine = N(3)-methylpseudouridine(1915) in 23S rRNA + S-adenosyl-L-homocysteine + H(+). In terms of biological role, specifically methylates the pseudouridine at position 1915 (m3Psi1915) in 23S rRNA. The chain is Ribosomal RNA large subunit methyltransferase H from Cereibacter sphaeroides (strain ATCC 17025 / ATH 2.4.3) (Rhodobacter sphaeroides).